Reading from the N-terminus, the 250-residue chain is MSHNFHVIIPARYHSSRFPGKLLQEINGITVIERVYRQALLAEPKSVIIATDHDEIADRAIQFGAEVVITSHTHQTGTDRIAEVVAKGSFAPDDVIVNVQGDEPFIRPKLIQQVACSLTKTKAPVSTLCWPISSLQILNNPNVVKVVCTRDNHALYFSRSAIPFHRDDKNAYSNTFRHIGLYAYRAAFLLEFVSWPPCALEQIECLEQLRILWSGFSIRVDEACEEPLQDINTKEDLILAQQYFLDTFNV.

This sequence belongs to the KdsB family.

The protein localises to the cytoplasm. The enzyme catalyses 3-deoxy-alpha-D-manno-oct-2-ulosonate + CTP = CMP-3-deoxy-beta-D-manno-octulosonate + diphosphate. The protein operates within nucleotide-sugar biosynthesis; CMP-3-deoxy-D-manno-octulosonate biosynthesis; CMP-3-deoxy-D-manno-octulosonate from 3-deoxy-D-manno-octulosonate and CTP: step 1/1. Its pathway is bacterial outer membrane biogenesis; lipopolysaccharide biosynthesis. Its function is as follows. Activates KDO (a required 8-carbon sugar) for incorporation into bacterial lipopolysaccharide in Gram-negative bacteria. This chain is 3-deoxy-manno-octulosonate cytidylyltransferase, found in Legionella pneumophila (strain Paris).